A 102-amino-acid polypeptide reads, in one-letter code: NADH-quinone oxidoreductase subunit K (102 aa).

The next 3 helical transmembrane spans lie at 6-26 (LEHG…GLMV), 30-50 (ILFV…AFVV), and 62-82 (VMFI…LAIL).

The protein belongs to the complex I subunit 4L family. As to quaternary structure, NDH-1 is composed of 13 different subunits. Subunits NuoA, H, J, K, L, M, N constitute the membrane sector of the complex.

It localises to the cell inner membrane. It catalyses the reaction a quinone + NADH + 5 H(+)(in) = a quinol + NAD(+) + 4 H(+)(out). Its function is as follows. NDH-1 shuttles electrons from NADH, via FMN and iron-sulfur (Fe-S) centers, to quinones in the respiratory chain. The immediate electron acceptor for the enzyme in this species is believed to be ubiquinone. Couples the redox reaction to proton translocation (for every two electrons transferred, four hydrogen ions are translocated across the cytoplasmic membrane), and thus conserves the redox energy in a proton gradient. This Pseudomonas aeruginosa (strain LESB58) protein is NADH-quinone oxidoreductase subunit K.